The primary structure comprises 273 residues: Phosphatidylglycerol--prolipoprotein diacylglyceryl transferase (273 aa).

4 consecutive transmembrane segments (helical) span residues 18-38, 47-67, 89-109, and 116-136; these read IPVR…YVVG, LPED…IICA, IWNG…TAYI, and VSFL…QIIG. Arginine 137 serves as a coordination point for a 1,2-diacyl-sn-glycero-3-phospho-(1'-sn-glycerol). 3 helical membrane passes run 178 to 198, 207 to 227, and 238 to 258; these read VHPT…ILLI, GEIF…IEGM, and LRSA…AIIY.

This sequence belongs to the Lgt family.

It localises to the cell membrane. The catalysed reaction is L-cysteinyl-[prolipoprotein] + a 1,2-diacyl-sn-glycero-3-phospho-(1'-sn-glycerol) = an S-1,2-diacyl-sn-glyceryl-L-cysteinyl-[prolipoprotein] + sn-glycerol 1-phosphate + H(+). It participates in protein modification; lipoprotein biosynthesis (diacylglyceryl transfer). In terms of biological role, catalyzes the transfer of the diacylglyceryl group from phosphatidylglycerol to the sulfhydryl group of the N-terminal cysteine of a prolipoprotein, the first step in the formation of mature lipoproteins. This chain is Phosphatidylglycerol--prolipoprotein diacylglyceryl transferase, found in Lysinibacillus sphaericus (strain C3-41).